The sequence spans 348 residues: Mannonate dehydratase (348 aa).

Belongs to the mannonate dehydratase family. The cofactor is Fe(2+). It depends on Mn(2+) as a cofactor.

It catalyses the reaction D-mannonate = 2-dehydro-3-deoxy-D-gluconate + H2O. Its pathway is carbohydrate metabolism; pentose and glucuronate interconversion. In terms of biological role, catalyzes the dehydration of D-mannonate. The sequence is that of Mannonate dehydratase from Streptococcus agalactiae serotype III (strain NEM316).